A 417-amino-acid polypeptide reads, in one-letter code: FAD-dependent monooxygenase aptC (417 aa).

A signal peptide spans 1 to 18 (MTLPVLIIGAGLSGLTTA). 5 residues coordinate FAD: E32, A43, R117, D332, and G345.

It belongs to the paxM FAD-dependent monooxygenase family. It depends on FAD as a cofactor.

It carries out the reaction 3,6,8,9-tetrahydroxy-1-oxo-3-(2-oxopropyl)-1,2,3,4-tetrahydroanthracene-2-carboxyl-[ACP] + NADPH + O2 + H(+) = 2,3,6,8,9-pentahydroxy-1-oxo-3-(2-oxopropyl)-1,2,3,4-tetrahydroanthracene-2-carboxyl-[ACP] + NADP(+) + H2O. The protein operates within secondary metabolite biosynthesis. Its function is as follows. FAD-dependent monooxygenase; part of the gene cluster that mediates the biosynthesis of asperthecin, an anthraquinone pigment. Polyketide synthase (PKS) aptA catalyzes the formation of the aromatic polyketide from acetyl coenzyme A and seven malonyl coenzyme A molecules. Polyketide is subsequently hydrolyzed by the action of the hydrolase aptB into endocrocin-9-anthrone. Endocrocin-9-anthrone is then oxidized into endocrocin by the monooxygenase aptC. Endocrocin is likely to decarboxylate spontaneously to form emodin which explains why there is no decarboxylase in the asperthecin biosynthesis cluster. Finally, aptC or another endogenous oxygenase catalyzes additional oxidation steps to form asperthecin. This is FAD-dependent monooxygenase aptC from Emericella nidulans (strain FGSC A4 / ATCC 38163 / CBS 112.46 / NRRL 194 / M139) (Aspergillus nidulans).